A 77-amino-acid chain; its full sequence is Acyl carrier protein (77 aa).

Residues 2-77 (SDVAKRVKEI…DAIDYITEHT (76 aa)) form the Carrier domain. At Ser37 the chain carries O-(pantetheine 4'-phosphoryl)serine.

It belongs to the acyl carrier protein (ACP) family. 4'-phosphopantetheine is transferred from CoA to a specific serine of apo-ACP by AcpS. This modification is essential for activity because fatty acids are bound in thioester linkage to the sulfhydryl of the prosthetic group.

The protein localises to the cytoplasm. The protein operates within lipid metabolism; fatty acid biosynthesis. In terms of biological role, carrier of the growing fatty acid chain in fatty acid biosynthesis. The sequence is that of Acyl carrier protein from Trichlorobacter lovleyi (strain ATCC BAA-1151 / DSM 17278 / SZ) (Geobacter lovleyi).